The chain runs to 854 residues: Putative COX1/OXI3 intron 2 protein (854 aa).

Positions 329–613 (LSKDINTNMF…EGVSFLGYDV (285 aa)) constitute a Reverse transcriptase domain.

It localises to the mitochondrion. This is Putative COX1/OXI3 intron 2 protein (AI2) from Saccharomyces cerevisiae (strain ATCC 204508 / S288c) (Baker's yeast).